The primary structure comprises 108 residues: Pyrimidine/purine nucleoside phosphorylase (108 aa).

It belongs to the nucleoside phosphorylase PpnP family.

It catalyses the reaction a purine D-ribonucleoside + phosphate = a purine nucleobase + alpha-D-ribose 1-phosphate. The catalysed reaction is adenosine + phosphate = alpha-D-ribose 1-phosphate + adenine. The enzyme catalyses cytidine + phosphate = cytosine + alpha-D-ribose 1-phosphate. It carries out the reaction guanosine + phosphate = alpha-D-ribose 1-phosphate + guanine. It catalyses the reaction inosine + phosphate = alpha-D-ribose 1-phosphate + hypoxanthine. The catalysed reaction is thymidine + phosphate = 2-deoxy-alpha-D-ribose 1-phosphate + thymine. The enzyme catalyses uridine + phosphate = alpha-D-ribose 1-phosphate + uracil. It carries out the reaction xanthosine + phosphate = alpha-D-ribose 1-phosphate + xanthine. Functionally, catalyzes the phosphorolysis of diverse nucleosides, yielding D-ribose 1-phosphate and the respective free bases. Can use uridine, adenosine, guanosine, cytidine, thymidine, inosine and xanthosine as substrates. Also catalyzes the reverse reactions. This is Pyrimidine/purine nucleoside phosphorylase from Polaromonas sp. (strain JS666 / ATCC BAA-500).